Here is a 331-residue protein sequence, read N- to C-terminus: Probable cytosolic iron-sulfur protein assembly protein Ciao1 (331 aa).

WD repeat units follow at residues 12–51 (GHKGRIWGVAWHPKGNSFASCGEDKAIRIWSLSGNTWTTK), 57–96 (GHKRTIREVRWSPCGEYLASASFDATTAIWSKHECTATLE), 97–136 (GHENEVKSVSWSRSGGLLATCSRDKSVWIWEVAGDDEFEC), 142–181 (AHSQDVKRVVWHPTKEVLASASYDNTIKMFAESALDSDWD), 188–227 (SHTSTVWSIDFDADGERLVSCSDDATLKIWRAYHPGNDAG), 246–285 (EHSRAIYDVSWCKQTGLIASACGDDGIRIFKECSDSKRDA), and 297–331 (AHEQDVNAVEWNPVTAGQLISCSDDGTIKIWKLQE).

It belongs to the WD repeat CIA1 family.

Essential component of the cytosolic iron-sulfur (Fe/S) protein assembly machinery. Required for the maturation of extramitochondrial Fe/S proteins. The sequence is that of Probable cytosolic iron-sulfur protein assembly protein Ciao1 from Drosophila virilis (Fruit fly).